We begin with the raw amino-acid sequence, 147 residues long: Lipoprotein YafY (147 aa).

Residues 1–20 (MKRKTLPLLALVATTLFLIA) form the signal peptide. Residue Cys21 is the site of N-palmitoyl cysteine attachment. Cys21 carries S-diacylglycerol cysteine lipidation.

It to E.coli YfjS.

It localises to the cell inner membrane. Its function is as follows. When overproduced strongly induces degP through the activation of the two-component envelope stress response system CpxA/CpxR. The polypeptide is Lipoprotein YafY (yafY) (Escherichia coli (strain K12)).